A 146-amino-acid polypeptide reads, in one-letter code: Hemoglobin subunit beta (146 aa).

V1 carries the post-translational modification N-acetylvaline. One can recognise a Globin domain in the interval 2-146 (HLTADEKAAV…VATALAHKYH (145 aa)). T12 is subject to Phosphothreonine. A Phosphoserine modification is found at S44. At K59 the chain carries N6-acetyllysine. H63 provides a ligand contact to heme b. Residue K82 is modified to N6-acetyllysine. H92 is a binding site for heme b. C93 is modified (S-nitrosocysteine). An N6-acetyllysine modification is found at K144.

The protein belongs to the globin family. In terms of assembly, heterotetramer of two alpha chains and two beta chains. Red blood cells.

Functionally, involved in oxygen transport from the lung to the various peripheral tissues. This Cephalopachus bancanus (Western tarsier) protein is Hemoglobin subunit beta (HBB).